We begin with the raw amino-acid sequence, 419 residues long: Hydrolase LUC6 (419 aa).

Ser-238 is a catalytic residue.

It belongs to the AB hydrolase superfamily. FUS2 hydrolase family.

It participates in mycotoxin biosynthesis. In terms of biological role, hydrolase; part of the gene cluster that mediates the biosynthesis of the mycotoxin lucilactaene and the lucilactaene-related compound NG-391 that act as cell cycle inhibitors with potent growth inhibitory activity against malarial parasites, moderate growth inhibitory activity against cancer cells, and no activity against bacteria and fungi. Within the pathway, LUC6 may catalyze the 2-pyrrolidone ring formation to form prelucilactaene C from prelucilactaene B, followed by C-15 hydroxylation by the same enzyme to give prelucilactaene D, epoxydation to yield prelucilactaene E, and finally cyclization to yield prelucilactaene F. The pathway begins with the hybrid PKS-NRPS synthetase LUC5 which is responsible for the condensation of one acetyl-coenzyme A (CoA) unit with six malonyl-CoA units and the amide linkage of the arising heptaketide and homoserine, subsequently releasing the first intermediate prelucilactaene B. Both the cytochrome P450 monooxygenase LUC2 and the hydrolase LUC6 function in parallel in modification of prelucilactaene B. LUC6 may catalyze the 2-pyrrolidone ring formation to form prelucilactaene C from prelucilactaene B, followed by C-15 hydroxylation by the same enzyme to give prelucilactaene D, which is then converted to prelucilactaene E by epoxidation, and finally to prelucilactaene F by cyclization. Prelucilactane D, prelucilactaene E, and prelucilactaene F can be converted to dihydrolucilactaene, NG391, and lucilactaene, respectively, via C-20 methyl group hydroxylation by the cytochrome P450 monooxygenase LUC2. However, LUC2, unlike FUS8 in fusarin C biosynthesis, is not enough for the full oxidation of the C-20 methyl group into carboxylic acid, which is a prerequisite for the final methylation step. The aldehyde dehydrogenase LUC3 is involved in the biosynthesis by further oxidation of the C-20 alcoholic analog prelucilactaene G into a carboxylic derivative. This unidentified carboxylic derivative may be converted to demethyllucilactaene. As the last step, the methyltransferase LUC1 methylates the hydroxyl group at C-21 of demethyllucilactaene to generate lucilactaene. The sequence is that of Hydrolase LUC6 from Fusarium sp.